A 778-amino-acid chain; its full sequence is Protein translocase subunit SecA 2 (778 aa).

ATP-binding positions include glutamine 94, 112 to 116 (GEGKT), and aspartate 501.

It belongs to the SecA family. Monomer and homodimer. Part of the essential Sec protein translocation apparatus which comprises SecA, SecYEG and auxiliary proteins SecDF. Other proteins may also be involved.

Its subcellular location is the cell membrane. The protein localises to the cytoplasm. It carries out the reaction ATP + H2O + cellular proteinSide 1 = ADP + phosphate + cellular proteinSide 2.. Functionally, part of the Sec protein translocase complex. Interacts with the SecYEG preprotein conducting channel. Has a central role in coupling the hydrolysis of ATP to the transfer of proteins into and across the cell membrane, serving as an ATP-driven molecular motor driving the stepwise translocation of polypeptide chains across the membrane. The polypeptide is Protein translocase subunit SecA 2 (Mycobacterium leprae (strain TN)).